Here is a 209-residue protein sequence, read N- to C-terminus: Uracil phosphoribosyltransferase (209 aa).

5-phospho-alpha-D-ribose 1-diphosphate contacts are provided by residues Arg-79, Arg-104, and 131-139 (DPMLATGGS). Residues Ile-194 and 199 to 201 (GDA) each bind uracil. Asp-200 is a binding site for 5-phospho-alpha-D-ribose 1-diphosphate.

It belongs to the UPRTase family. Mg(2+) serves as cofactor.

The catalysed reaction is UMP + diphosphate = 5-phospho-alpha-D-ribose 1-diphosphate + uracil. The protein operates within pyrimidine metabolism; UMP biosynthesis via salvage pathway; UMP from uracil: step 1/1. Allosterically activated by GTP. Functionally, catalyzes the conversion of uracil and 5-phospho-alpha-D-ribose 1-diphosphate (PRPP) to UMP and diphosphate. The sequence is that of Uracil phosphoribosyltransferase from Bacillus velezensis (strain DSM 23117 / BGSC 10A6 / LMG 26770 / FZB42) (Bacillus amyloliquefaciens subsp. plantarum).